The chain runs to 1551 residues: Serine/threonine-protein kinase MRCK gamma (1551 aa).

In terms of domain architecture, Protein kinase spans 71 to 337 (FEILKVIGRG…LDDFRKHPFF (267 aa)). ATP is bound by residues 77–85 (IGRGAFGEV) and lysine 100. Aspartate 195 functions as the Proton acceptor in the catalytic mechanism. Phosphoserine; by autocatalysis occurs at positions 216 and 228. Threonine 234 is subject to Phosphothreonine; by autocatalysis. Residues 338–408 (EGVDWERLAT…TSGSPFDVQS (71 aa)) enclose the AGC-kinase C-terminal domain. Coiled coils occupy residues 442 to 675 (QPQE…TESN) and 729 to 801 (KARR…QARG). A disordered region spans residues 578 to 605 (QESSQAKTVHAAPETNGIGSPEGQSQEA). The segment at 820–886 (TEKDSAKDPG…SHTLRPRSFP (67 aa)) is disordered. The segment covering 839–849 (AEAELRPEGRR) has biased composition (basic and acidic residues). Residues 877-926 (SHTLRPRSFPSPTKCLRCTSLMLGLGRQGLGCDTCGYFCHSACASQAPPC) form a Phorbol-ester/DAG-type zinc finger. Residues 946–1065 (GTAYEGFLSV…WLQVLGELQR (120 aa)) enclose the PH domain. A CNH domain is found at 1091–1365 (LPHALCAAVI…RPLNPEGSLF (275 aa)). The 14-residue stretch at 1436–1449 (ISPPTNFNHLVHVG) folds into the CRIB domain. A disordered region spans residues 1441–1551 (NFNHLVHVGP…PPDPESESSP (111 aa)). The segment covering 1455-1468 (PNTRDGTRAQEQKS) has biased composition (basic and acidic residues). Serine 1481 is subject to Phosphoserine. Residues 1511–1527 (TSLSSESVSCPQGSLSP) show a composition bias toward polar residues.

The protein belongs to the protein kinase superfamily. AGC Ser/Thr protein kinase family. DMPK subfamily. Homodimer and homotetramer via the coiled coil regions. Interacts tightly with GTP-bound but not GDP-bound CDC42. Requires Mg(2+) as cofactor.

The protein resides in the cytoplasm. It catalyses the reaction L-seryl-[protein] + ATP = O-phospho-L-seryl-[protein] + ADP + H(+). It carries out the reaction L-threonyl-[protein] + ATP = O-phospho-L-threonyl-[protein] + ADP + H(+). Maintained in an inactive, closed conformation by an interaction between the kinase domain and the negative autoregulatory C-terminal coiled-coil region. Agonist binding to the phorbol ester binding site disrupts this, releasing the kinase domain to allow N-terminus-mediated dimerization and kinase activation by transautophosphorylation. Functionally, may act as a downstream effector of CDC42 in cytoskeletal reorganization. Contributes to the actomyosin contractility required for cell invasion, through the regulation of MYPT1 and thus MLC2 phosphorylation. The polypeptide is Serine/threonine-protein kinase MRCK gamma (Mus musculus (Mouse)).